A 523-amino-acid chain; its full sequence is Solute carrier family 35 member F5 (523 aa).

The next 2 membrane-spanning stretches (helical) occupy residues M69 to L89 and F101 to W121. At S207 the chain carries Phosphoserine. 8 helical membrane passes run I243–S263, A268–F288, F296–L316, T327–I347, M361–L381, V395–W415, F420–I440, and W452–C472. In terms of domain architecture, EamA spans F252–L316.

Belongs to the SLC35F solute transporter family.

The protein localises to the membrane. Its function is as follows. Putative solute transporter. In Pongo abelii (Sumatran orangutan), this protein is Solute carrier family 35 member F5 (SLC35F5).